We begin with the raw amino-acid sequence, 143 residues long: MESDRETIHLQHRHSMRGGNQRIDLNFYATKKSVAESMLDVALFMSNAMRLKSVLQQGPFAEYYTTLVTLIIVSLLLQVVISLLLVFIAILNLNEVENQRHLNKLNNAATILVFITVVINIFITAFGAHHAASMAARTSSNPI.

The Extracellular portion of the chain corresponds to 1-61 (MESDRETIHL…KSVLQQGPFA (61 aa)). The helix alpha1 stretch occupies residues 26–38 (NFYATKKSVAESM). The segment at 39-58 (LDVALFMSNAMRLKSVLQQG) is helix alpha2. The helical transmembrane segment at 62–93 (EYYTTLVTLIIVSLLLQVVISLLLVFIAILNL) threads the bilayer. Residues 94-97 (NEVE) are Cytoplasmic-facing. Residues 98 to 127 (NQRHLNKLNNAATILVFITVVINIFITAFG) traverse the membrane as a helical segment. A cholesterol-binding site is contributed by lysine 104. At 128 to 143 (AHHAASMAARTSSNPI) the chain is on the extracellular side.

Belongs to the ninjurin family. In terms of assembly, homooligomer; in response to stimuli, homooligomerizes into filaments. In contrast to NINJ1, the filament is curved toward the intracellular space, preventing its circularization on a relatively flat membrane to mediate plasma membrane rupture: curvature is caused by cholesterol-binding at the cytoplasmic leaflet.

Its subcellular location is the cell membrane. In terms of biological role, its role in unclear. In contrast to NINJ1 paralog, does not mediate plasma membrane rupture (cytolysis) downstream of necroptotic and pyroptotic programmed cell death. While it is able to oligomerize and form filaments, filaments are curved toward the intracellular space, preventing circularization to mediate plasma membrane rupture. May act as a homophilic transmembrane adhesion molecule involved in nerve regeneration. Promotes axonal growth. This Mus musculus (Mouse) protein is Ninjurin-2 (Ninj2).